We begin with the raw amino-acid sequence, 163 residues long: ATP synthase subunit b 1 (163 aa).

The chain crosses the membrane as a helical span at residues 6 to 26 (LAELWVAVAFLLFVGILIYVG).

The protein belongs to the ATPase B chain family. In terms of assembly, F-type ATPases have 2 components, F(1) - the catalytic core - and F(0) - the membrane proton channel. F(1) has five subunits: alpha(3), beta(3), gamma(1), delta(1), epsilon(1). F(0) has three main subunits: a(1), b(2) and c(10-14). The alpha and beta chains form an alternating ring which encloses part of the gamma chain. F(1) is attached to F(0) by a central stalk formed by the gamma and epsilon chains, while a peripheral stalk is formed by the delta and b chains.

It is found in the cell inner membrane. In terms of biological role, f(1)F(0) ATP synthase produces ATP from ADP in the presence of a proton or sodium gradient. F-type ATPases consist of two structural domains, F(1) containing the extramembraneous catalytic core and F(0) containing the membrane proton channel, linked together by a central stalk and a peripheral stalk. During catalysis, ATP synthesis in the catalytic domain of F(1) is coupled via a rotary mechanism of the central stalk subunits to proton translocation. Component of the F(0) channel, it forms part of the peripheral stalk, linking F(1) to F(0). The protein is ATP synthase subunit b 1 of Xanthobacter autotrophicus (strain ATCC BAA-1158 / Py2).